A 352-amino-acid polypeptide reads, in one-letter code: Ribosome biogenesis protein BRX1 homolog (352 aa).

A disordered region spans residues 1-47 (MAATKRKRRGDLEVQAKKPKKNRKDAGQPAKQADVAKEAEEEKDRIP). Over residues 34–46 (DVAKEAEEEKDRI) the composition is skewed to basic and acidic residues. Residues 59-248 (ERILIFSSRG…LIKIFQGSFG (190 aa)) enclose the Brix domain. Residue Lys159 forms a Glycyl lysine isopeptide (Lys-Gly) (interchain with G-Cter in SUMO2) linkage. The residue at position 260 (Ser260) is a Phosphoserine. Residue Lys275 is modified to N6-acetyllysine. The tract at residues 281–301 (QVKDVQKSRKKEPKTILPHDP) is disordered. Residues Lys313 and Lys321 each participate in a glycyl lysine isopeptide (Lys-Gly) (interchain with G-Cter in SUMO2) cross-link.

The protein belongs to the BRX1 family.

It is found in the nucleus. The protein resides in the nucleolus. Functionally, required for biogenesis of the 60S ribosomal subunit. In Rattus norvegicus (Rat), this protein is Ribosome biogenesis protein BRX1 homolog (Brix1).